The following is a 121-amino-acid chain: UPF0295 protein BH0952 (121 aa).

The next 2 helical transmembrane spans lie at 12 to 32 and 41 to 61; these read IRTFALSLVFLGILVMYIGIF and VLAMILGFLCIIASTAVYFWI.

It belongs to the UPF0295 family.

Its subcellular location is the cell membrane. In Halalkalibacterium halodurans (strain ATCC BAA-125 / DSM 18197 / FERM 7344 / JCM 9153 / C-125) (Bacillus halodurans), this protein is UPF0295 protein BH0952.